The primary structure comprises 427 residues: Mitogen-activated protein kinase 8 (427 aa).

The Protein kinase domain occupies Y26 to I321. ATP contacts are provided by residues I32 to V40 and K55. At C116 the chain carries S-nitrosocysteine. The active-site Proton acceptor is D151. Position 183 is a phosphothreonine; by MAP2K7 (T183). A TXY motif is present at residues T183–Y185. The residue at position 185 (Y185) is a Phosphotyrosine; by MAP2K4. M301 and S377 each carry phosphoserine. Residues V371–R427 are disordered. Over residues S387–S403 the composition is skewed to low complexity. Residues T404–S415 are compositionally biased toward polar residues.

It belongs to the protein kinase superfamily. CMGC Ser/Thr protein kinase family. MAP kinase subfamily. Forms a complex with MAPK8IP1 and ARHGEF28. Found in a complex with SH3RF1, RAC1, MAP3K11/MLK3, MAP2K7/MKK7 and MAPK8IP1/JIP1. Found in a complex with SH3RF1, RAC2, MAP3K7/TAK1, MAP2K7/MKK7, MAPK8IP1/JIP1 and MAPK9/JNK2. Binds to at least four scaffolding proteins, MAPK8IP1/JIP-1, MAPK8IP2/JIP-2, MAPK8IP3/JIP-3/JSAP1 and SPAG9/MAPK8IP4/JIP-4. These proteins also bind other components of the JNK signaling pathway. Interacts with TP53 and WWOX. Interacts with JAMP. Interacts with HSF1 (via D domain and preferentially with hyperphosphorylated form); this interaction occurs under both normal growth conditions and immediately upon heat shock. Interacts (phosphorylated form) with NFE2; the interaction phosphorylates NFE2 in undifferentiated cells. Interacts with NFATC4. Interacts with MECOM; regulates JNK signaling. Interacts with PIN1; this interaction mediates MAPK8 conformational changes leading to the binding of MAPK8 to its substrates. Interacts with GRIPAP1. Interacts with POU5F1; phosphorylates POU5F1 at 'Ser-355'. Interacts with STMN2, STMN3 and STMN4. Interacts with HSF4. It depends on Mg(2+) as a cofactor. In terms of processing, dually phosphorylated on Thr-183 and Tyr-185 by MAP2K7 and MAP2K4, which activates the enzyme. Phosphorylated by TAOK2. May be phosphorylated at Thr-183 and Tyr-185 by MAP3K1/MEKK1. Phosphorylated form is more concentrated at synapses than none-phosphorylated.

The protein resides in the cytoplasm. It localises to the nucleus. It is found in the synapse. It catalyses the reaction L-seryl-[protein] + ATP = O-phospho-L-seryl-[protein] + ADP + H(+). The enzyme catalyses L-threonyl-[protein] + ATP = O-phospho-L-threonyl-[protein] + ADP + H(+). Activated by threonine and tyrosine phosphorylation by either of two dual specificity kinases, MAP2K4 and MAP2K7. MAP2K4 shows a strong preference for Tyr-185 while MAP2K7 phosphorylates Tyr-183 preferentially. Inhibited by dual specificity phosphatases, such as DUSP1. Inhibited by SERPINB3. In terms of biological role, serine/threonine-protein kinase involved in various processes such as cell proliferation, differentiation, migration, transformation and programmed cell death. Extracellular stimuli such as pro-inflammatory cytokines or physical stress stimulate the stress-activated protein kinase/c-Jun N-terminal kinase (SAP/JNK) signaling pathway. In this cascade, two dual specificity kinases MAP2K4/MKK4 and MAP2K7/MKK7 phosphorylate and activate MAPK8/JNK1. In turn, MAPK8/JNK1 phosphorylates a number of transcription factors, primarily components of AP-1 such as JUN, JDP2 and ATF2 and thus regulates AP-1 transcriptional activity. Phosphorylates the replication licensing factor CDT1, inhibiting the interaction between CDT1 and the histone H4 acetylase HBO1 to replication origins. Loss of this interaction abrogates the acetylation required for replication initiation. Promotes stressed cell apoptosis by phosphorylating key regulatory factors including p53/TP53 and Yes-associates protein YAP1. In T-cells, MAPK8 and MAPK9 are required for polarized differentiation of T-helper cells into Th1 cells. Contributes to the survival of erythroid cells by phosphorylating the antagonist of cell death BAD upon EPO stimulation. Mediates starvation-induced BCL2 phosphorylation, BCL2 dissociation from BECN1, and thus activation of autophagy. Phosphorylates STMN2 and hence regulates microtubule dynamics, controlling neurite elongation in cortical neurons. In the developing brain, through its cytoplasmic activity on STMN2, negatively regulates the rate of exit from multipolar stage and of radial migration from the ventricular zone. Phosphorylates several other substrates including heat shock factor protein 4 (HSF4), the deacetylase SIRT1, ELK1, or the E3 ligase ITCH. Phosphorylates the CLOCK-BMAL1 heterodimer and plays a role in the regulation of the circadian clock. Phosphorylates the heat shock transcription factor HSF1, suppressing HSF1-induced transcriptional activity. Phosphorylates POU5F1, which results in the inhibition of POU5F1's transcriptional activity and enhances its proteasomal degradation. Phosphorylates JUND and this phosphorylation is inhibited in the presence of MEN1. In neurons, phosphorylates SYT4 which captures neuronal dense core vesicles at synapses. Phosphorylates EIF4ENIF1/4-ET in response to oxidative stress, promoting P-body assembly. Phosphorylates SIRT6 in response to oxidative stress, stimulating its mono-ADP-ribosyltransferase activity. Phosphorylates NLRP3, promoting assembly of the NLRP3 inflammasome. Phosphorylates ALKBH5 in response to reactive oxygen species (ROS), promoting ALKBH5 sumoylation and inactivation. JNK1 isoforms display different binding patterns: beta-1 preferentially binds to c-Jun, whereas alpha-1, alpha-2, and beta-2 have a similar low level of binding to both c-Jun or ATF2. However, there is no correlation between binding and phosphorylation, which is achieved at about the same efficiency by all isoforms. The polypeptide is Mitogen-activated protein kinase 8 (MAPK8) (Homo sapiens (Human)).